Consider the following 919-residue polypeptide: Isoleucine--tRNA ligase (919 aa).

The 'HIGH' region motif lies at Pro-57 to His-67. Glu-569 lines the L-isoleucyl-5'-AMP pocket. The 'KMSKS' region motif lies at Lys-610–Ser-614. Residue Lys-613 coordinates ATP. Residues Cys-896, Cys-899, Cys-911, and Cys-914 each contribute to the Zn(2+) site.

This sequence belongs to the class-I aminoacyl-tRNA synthetase family. IleS type 1 subfamily. In terms of assembly, monomer. Requires Zn(2+) as cofactor.

It is found in the cytoplasm. It catalyses the reaction tRNA(Ile) + L-isoleucine + ATP = L-isoleucyl-tRNA(Ile) + AMP + diphosphate. In terms of biological role, catalyzes the attachment of isoleucine to tRNA(Ile). As IleRS can inadvertently accommodate and process structurally similar amino acids such as valine, to avoid such errors it has two additional distinct tRNA(Ile)-dependent editing activities. One activity is designated as 'pretransfer' editing and involves the hydrolysis of activated Val-AMP. The other activity is designated 'posttransfer' editing and involves deacylation of mischarged Val-tRNA(Ile). The protein is Isoleucine--tRNA ligase of Aliarcobacter butzleri (strain RM4018) (Arcobacter butzleri).